Consider the following 744-residue polypeptide: Probable ubiquitin carboxyl-terminal hydrolase MINDY-4 (744 aa).

A phosphoserine mark is found at Ser143, Ser220, and Ser224. The tract at residues 211–358 (GMMAGPVASS…QLVSDRTDDK (148 aa)) is disordered. The span at 265–277 (VPDSSSDSVSRSP) shows a compositional bias: low complexity. The span at 290–299 (NVTSSSQGLS) shows a compositional bias: polar residues. Phosphoserine is present on Ser295. Positions 300–310 (QRDRPRLRSVS) are enriched in basic and acidic residues. Cys443 (nucleophile) is an active-site residue. Catalysis depends on His664, which acts as the Proton acceptor.

It belongs to the MINDY deubiquitinase family. FAM188 subfamily.

The enzyme catalyses Thiol-dependent hydrolysis of ester, thioester, amide, peptide and isopeptide bonds formed by the C-terminal Gly of ubiquitin (a 76-residue protein attached to proteins as an intracellular targeting signal).. Functionally, probable hydrolase that can remove 'Lys-48'-linked conjugated ubiquitin from proteins. This chain is Probable ubiquitin carboxyl-terminal hydrolase MINDY-4 (Mindy4), found in Mus musculus (Mouse).